We begin with the raw amino-acid sequence, 478 residues long: Phenylalanine--tRNA ligase alpha subunit (478 aa).

Residues Thr-318, 357–359, and Tyr-397 each bind L-phenylalanine; that span reads QLE. Glu-399 contacts Mg(2+). Phe-422 lines the L-phenylalanine pocket.

This sequence belongs to the class-II aminoacyl-tRNA synthetase family. Phe-tRNA synthetase alpha subunit type 2 subfamily. As to quaternary structure, tetramer of two alpha and two beta subunits. Requires Mg(2+) as cofactor.

It is found in the cytoplasm. It catalyses the reaction tRNA(Phe) + L-phenylalanine + ATP = L-phenylalanyl-tRNA(Phe) + AMP + diphosphate + H(+). The sequence is that of Phenylalanine--tRNA ligase alpha subunit from Methanospirillum hungatei JF-1 (strain ATCC 27890 / DSM 864 / NBRC 100397 / JF-1).